Here is a 269-residue protein sequence, read N- to C-terminus: Ribosomal RNA small subunit methyltransferase A (269 aa).

Positions 11, 13, 37, 57, 85, and 104 each coordinate S-adenosyl-L-methionine.

Belongs to the class I-like SAM-binding methyltransferase superfamily. rRNA adenine N(6)-methyltransferase family. RsmA subfamily.

The protein resides in the cytoplasm. The catalysed reaction is adenosine(1518)/adenosine(1519) in 16S rRNA + 4 S-adenosyl-L-methionine = N(6)-dimethyladenosine(1518)/N(6)-dimethyladenosine(1519) in 16S rRNA + 4 S-adenosyl-L-homocysteine + 4 H(+). Functionally, specifically dimethylates two adjacent adenosines (A1518 and A1519) in the loop of a conserved hairpin near the 3'-end of 16S rRNA in the 30S particle. May play a critical role in biogenesis of 30S subunits. This is Ribosomal RNA small subunit methyltransferase A from Campylobacter hominis (strain ATCC BAA-381 / DSM 21671 / CCUG 45161 / LMG 19568 / NCTC 13146 / CH001A).